A 660-amino-acid chain; its full sequence is DNA mismatch repair protein MutL (660 aa).

The disordered stretch occupies residues 414–433; that stretch reads SSVKHASRPQNTFTETDHPN.

It belongs to the DNA mismatch repair MutL/HexB family.

This protein is involved in the repair of mismatches in DNA. It is required for dam-dependent methyl-directed DNA mismatch repair. May act as a 'molecular matchmaker', a protein that promotes the formation of a stable complex between two or more DNA-binding proteins in an ATP-dependent manner without itself being part of a final effector complex. The polypeptide is DNA mismatch repair protein MutL (Streptococcus pyogenes serotype M5 (strain Manfredo)).